The chain runs to 842 residues: Glycogen phosphorylase, muscle form (842 aa).

At Ser-2 the chain carries N-acetylserine. Ser-15 is subject to Phosphoserine; by PHK; in form phosphorylase A. The AMP site is built by Asp-43 and Tyr-76. Phosphotyrosine is present on residues Tyr-204 and Tyr-227. Residue Arg-310–Ser-319 coordinates AMP. Ser-430 bears the Phosphoserine mark. The residue at position 473 (Tyr-473) is a Phosphotyrosine. Position 514 is a phosphoserine (Ser-514). At Lys-681 the chain carries N6-(pyridoxal phosphate)lysine. Phosphoserine occurs at positions 747 and 748.

It belongs to the glycogen phosphorylase family. In terms of assembly, homodimer. Homotetramer; to form the enzymatically active phosphorylase A. Pyridoxal 5'-phosphate serves as cofactor. Post-translationally, phosphorylation of Ser-15 converts phosphorylase B (unphosphorylated) to phosphorylase A.

It catalyses the reaction [(1-&gt;4)-alpha-D-glucosyl](n) + phosphate = [(1-&gt;4)-alpha-D-glucosyl](n-1) + alpha-D-glucose 1-phosphate. With respect to regulation, allosterically regulated through the non-covalent binding of metabolites, being activated by AMP and inhibited by ATP, ADP, and glucose-6-phosphate. The activity is also controlled by post-translational modifications including phosphorylation. Functionally, allosteric enzyme that catalyzes the rate-limiting step in glycogen catabolism, the phosphorolytic cleavage of glycogen to produce glucose-1-phosphate, and plays a central role in maintaining cellular and organismal glucose homeostasis. The protein is Glycogen phosphorylase, muscle form of Mus musculus (Mouse).